Here is a 255-residue protein sequence, read N- to C-terminus: Small ribosomal subunit protein uS10m (255 aa).

A mitochondrion-targeting transit peptide spans 1–32; the sequence is MALPAARSALSARAFIRPAAALNAAASSSRYL. 2 disordered regions span residues 30-52 and 220-255; these read RYLS…NSET and SEGE…AKSS. The span at 236 to 255 shows a compositional bias: basic and acidic residues; it reads DAAREEKPAEKLKEEEAKSS.

The protein belongs to the universal ribosomal protein uS10 family. As to quaternary structure, part of the mitochondrial small ribosomal subunit.

Its subcellular location is the mitochondrion. Functionally, involved in mitochondrial genome encoded proteins translation. Involved in the binding of tRNA to the ribosomes. The chain is Small ribosomal subunit protein uS10m (RSM10) from Cryptococcus neoformans var. neoformans serotype D (strain B-3501A) (Filobasidiella neoformans).